We begin with the raw amino-acid sequence, 742 residues long: Two pore calcium channel protein 1 (742 aa).

The tract at residues 1–44 is disordered; sequence MSEAQAPLITEEAAERGLASSGSRRLSDGGGGQGSRKYRRRSDA. Residues 1-82 lie on the Cytoplasmic side of the membrane; that stretch reads MSEAQAPLIT…NDTRFGRAMS (82 aa). The chain crosses the membrane as a helical span at residues 83–103; it reads FYFVYLRLDWLWSLNIFALIL. Residues 104–140 lie on the Extracellular side of the membrane; it reads LNFLEKPLWCRKDALHACDQRDMYFLGQLPYFSKTES. A helical membrane pass occupies residues 141–161; it reads LIYEGLTLVILVMEILCPLSY. Residues 162–176 lie on the Cytoplasmic side of the membrane; the sequence is EGLNIFWRSTTNKLK. A helical transmembrane segment spans residues 177 to 197; it reads ILLLFILACDILVFAFSSQPF. Topologically, residues 198 to 204 are extracellular; the sequence is RLAPYIR. Residues 205–226 form a helical; Voltage-sensor membrane-spanning segment; sequence VVFLIMTIRELRMCAITLAGLI. Residues 227–247 traverse the membrane as a helical segment; that stretch reads GTYLNVLALSLLFLLFASWLA. Topologically, residues 248–258 are extracellular; it reads YVTFEDTPQGK. Positions 259 to 273 form an intramembrane region, pore-forming; it reads TIFSSYGVTLYQMFV. Residues 274-296 lie on the Extracellular side of the membrane; that stretch reads LFTTSNNPDVWVPAYKISRWYSL. Residues 297–317 traverse the membrane as a helical segment; sequence FFIVYVLLGVYFLTNLILAVI. At 318–446 the chain is on the cytoplasmic side; sequence YDSFKEQFAK…SFVRSRTFEY (129 aa). EF-hand domains follow at residues 335–370 and 376–411; these read IRKN…LNKY and TSRE…IAIK. The helical transmembrane segment at 447 to 467 threads the bilayer; the sequence is IIVFVLLINLVAVIIETTLDI. Topologically, residues 468-480 are extracellular; it reads ENSSSQETWQEVE. Asn-469 is a glycosylation site (N-linked (GlcNAc...) asparagine). The chain crosses the membrane as a helical span at residues 481–501; it reads FFLGWIYVAEMALKIFSLGFG. Topologically, residues 502–510 are cytoplasmic; sequence AYWMEGQNK. Residues 511 to 531 form a helical membrane-spanning segment; the sequence is FDFVLTWTIFIGETLTFAFPS. Over 532–540 the chain is Extracellular; that stretch reads KLPFLSNGE. The helical; Voltage-sensor transmembrane segment at 541-558 threads the bilayer; sequence WIRYLLLGRVLRLTRILL. Over 559-582 the chain is Cytoplasmic; the sequence is QVQRFRVFVATFFTLMSSLMPYLG. A helical transmembrane segment spans residues 583–603; sequence IVFCILCMYCSLGLQIFGGIV. Topologically, residues 604–627 are extracellular; sequence YAGNPTLEETDLFSNDYLLFNFND. The segment at residues 628–642 is an intramembrane region (pore-forming); that stretch reads YPSGMVTLFNLLVMG. The Extracellular portion of the chain corresponds to 643 to 663; sequence NWQVWMESYWQLTGSSWSLIY. Residues 664 to 684 form a helical membrane-spanning segment; that stretch reads FVSFYLISILLLLNLIVAFVL. Topologically, residues 685–742 are cytoplasmic; it reads EAFFAEMELEKGEEVDIQSPTSGGIKKRRSMRVRSKGTMVDILLHHMLSNELDGSQNS.

It belongs to the calcium channel alpha-1 subunit (TC 1.A.1.11) family. Two pore calcium channel subfamily. As to quaternary structure, homodimer.

It localises to the membrane. Its activity is regulated as follows. Inhibited by Al(3+). Its function is as follows. Functions as a voltage-gated inward-rectifying Ca(2+) channel (VDCC) across the plasma membrane that mediates sucrose-induced Ca(2+) influx in autotrophically grown leaf cells. Acts as the major ROS-responsive Ca(2+) channel and is the possible target of Al-dependent inhibition. Plays a regulatory role in defense responses. The chain is Two pore calcium channel protein 1 (TPC1) from Hordeum vulgare (Barley).